We begin with the raw amino-acid sequence, 362 residues long: MKSSVYQKLEVLVERFEEVQALLSDPATISDQEKFRALSKEFKQLDAVTSVFNNYKSAEDDFSTAELMLKDDDPDMREMAQEEFKDAKKAVADIADELQILLLPRDPNDDNNCFVEIRAGAGGDEAAIFAGDLFRMYSRYAEKKGWKIEVMNSNESEQGGYKELIMKVNGEGVFGHMKFESGGHRVQRVPATESQGRVHTSACTVVVMPEIPEADAIEINKADLKVDTFRASGAGGQHVNKTDSAIRITHIPTGVVVECQEQRSQHKNRAQAMSVLQARLQQAEDEKRRSEEESSRRNLVASGDRSERIRTYNFPQGRMSDHRINLTLYRLNEIMEGSLQLVMEPIMQENQADLLAELAEQH.

Gln-237 is modified (N5-methylglutamine). Residues 279-305 are disordered; sequence RLQQAEDEKRRSEEESSRRNLVASGDR. Over residues 282-296 the composition is skewed to basic and acidic residues; the sequence is QAEDEKRRSEEESSR.

This sequence belongs to the prokaryotic/mitochondrial release factor family. Methylated by PrmC. Methylation increases the termination efficiency of RF1.

It is found in the cytoplasm. In terms of biological role, peptide chain release factor 1 directs the termination of translation in response to the peptide chain termination codons UAG and UAA. The chain is Peptide chain release factor 1 from Colwellia psychrerythraea (strain 34H / ATCC BAA-681) (Vibrio psychroerythus).